A 70-amino-acid chain; its full sequence is uncharacterized protein (70 aa).

This sequence belongs to the opacity porin family.

This is an uncharacterized protein from Haemophilus influenzae (strain ATCC 51907 / DSM 11121 / KW20 / Rd).